The primary structure comprises 93 residues: UPF0223 protein str0998 (93 aa).

It belongs to the UPF0223 family.

In Streptococcus thermophilus (strain CNRZ 1066), this protein is UPF0223 protein str0998.